The primary structure comprises 311 residues: Long form salivary protein D7L1 (311 aa).

The signal sequence occupies residues 1 to 16 (MKALIFLGAIIAGVLS). 2 disulfide bridges follow: Cys-34–Cys-67 and Cys-63–Cys-120. The ADP site is built by Ser-146, Arg-149, Tyr-153, and Lys-160. 3 disulfide bridges follow: Cys-170-Cys-202, Cys-183-Cys-311, and Cys-244-Cys-258. Residues Asn-281, Tyr-282, and Ser-283 each coordinate ADP.

Belongs to the PBP/GOBP family. As to expression, distal lateral and medial lobes of female mosquito salivary gland (at protein level). Expressed in the head and thorax of the female mosquitoes, where the salivary glands are located. Expressed in salivary gland. Not detected in the female mosquito abdomen. Not detected in the male mosquito tissues.

It localises to the secreted. Functionally, modulates blood feeding of female mosquitoes on vertebrate species by binding and sequestering different mediators involved in the host response. Binds adenine, adenosine, AMP, ADP and ATP, with the highest affinity to ATP and ADP. Inhibits agonist-induced platelet aggregation and hemostasis. The chain is Long form salivary protein D7L1 from Culex quinquefasciatus (Southern house mosquito).